Reading from the N-terminus, the 822-residue chain is Cadherin-3 (822 aa).

The N-terminal stretch at 1–25 (MELLSGPHAFLLLLLQVCWLRSVVS) is a signal peptide. Residues 26-99 (EPYRAGFIGE…PTRILRRRKR (74 aa)) constitute a propeptide that is removed on maturation. Cadherin domains are found at residues 100-207 (EWVM…KPKF), 208-320 (TQDT…APEF), 321-432 (EPQK…APVF), 433-538 (VPPS…DHGP), and 539-645 (IPEP…RPWK). The Extracellular portion of the chain corresponds to 100–647 (EWVMPPIFVP…NDCPRPWKGG (548 aa)). N-linked (GlcNAc...) asparagine glycosylation is present at asparagine 192. A glycan (N-linked (GlcNAc...) asparagine) is linked at asparagine 558. A helical transmembrane segment spans residues 648 to 670 (FILPILGAVLALLTLLLALLLLV). Topologically, residues 671-822 (RKKRKVKEPL…ADMYGGGEDD (152 aa)) are cytoplasmic.

As to quaternary structure, interacts with CDCP1 and CTNNB1.

The protein resides in the cell membrane. Cadherins are calcium-dependent cell adhesion proteins. They preferentially interact with themselves in a homophilic manner in connecting cells; cadherins may thus contribute to the sorting of heterogeneous cell types. This chain is Cadherin-3 (Cdh3), found in Mus musculus (Mouse).